A 941-amino-acid chain; its full sequence is Glycine dehydrogenase (decarboxylating) (941 aa).

Position 692 is an N6-(pyridoxal phosphate)lysine (Lys-692).

This sequence belongs to the GcvP family. The glycine cleavage system is composed of four proteins: P, T, L and H. Requires pyridoxal 5'-phosphate as cofactor.

It catalyses the reaction N(6)-[(R)-lipoyl]-L-lysyl-[glycine-cleavage complex H protein] + glycine + H(+) = N(6)-[(R)-S(8)-aminomethyldihydrolipoyl]-L-lysyl-[glycine-cleavage complex H protein] + CO2. Functionally, the glycine cleavage system catalyzes the degradation of glycine. The P protein binds the alpha-amino group of glycine through its pyridoxal phosphate cofactor; CO(2) is released and the remaining methylamine moiety is then transferred to the lipoamide cofactor of the H protein. The protein is Glycine dehydrogenase (decarboxylating) of Mycobacterium bovis (strain ATCC BAA-935 / AF2122/97).